The following is a 522-amino-acid chain: BTB/POZ domain-containing protein 3 (522 aa).

The 71-residue stretch at 120-190 (ADVHFVVGPP…IYCDEIDLAA (71 aa)) folds into the BTB domain. The region spanning 235-300 (FEEPDLTQRC…NWAEVECQRQ (66 aa)) is the BACK domain.

In terms of tissue distribution, strongly expressed in the primary visual cortex.

It is found in the cytoplasm. Its subcellular location is the cytosol. The protein localises to the nucleus. Functionally, acts as a key regulator of dendritic field orientation during development of sensory cortex. Also directs dendrites toward active axon terminals when ectopically expressed. The sequence is that of BTB/POZ domain-containing protein 3 (BTBD3) from Callithrix jacchus (White-tufted-ear marmoset).